We begin with the raw amino-acid sequence, 488 residues long: MSLPQHQNRDAARRAPDDDDDAEEETMANDYREQVQYDGMDDMDRMPSISNNQDIHAQLQAAATPLEFQATLETKFASYDNYCNLFHYILNSEGPVDLEVPNYYWAWDVIDEFIYQFNSFCSYRQKVALKNDNEEEITLLRENPNTWGCYSVLNVLYSLIQRSQISEQLAAMKRGEDAALYAGEYGNRPLYKMLGYFSIIGLLRVHCLLGDFSLALKTLDDIELNKKAMFARVMAAHFTTYYYVGFSYMMMRRYADAIRMFSHILVYVSRTKNFQKNAQYDSITKKNDQMYALVAICVAFHPTRLDDTIHTALREKYGEQFNRLQRGGPDALPLFEELFRTACPKFISPTPPDFDNPEVNIDPVEHHLRIFMDEVKNNMMSPTVKSYLKLYTTMDLKKLAGFLEVEPEKLRCWLLVNKQRNRQTRWSEGGLLERRGDPQQRSRLRHGKEISSTCLRPRSAGDWSTGIFVIWPGHTKARRRASRGRPLF.

2 disordered regions span residues 1–34 and 427–449; these read MSLPQHQNRDAARRAPDDDDDAEEETMANDYREQ and SEGGLLERRGDPQQRSRLRHGKE. Residues 7 to 16 are compositionally biased toward basic and acidic residues; it reads QNRDAARRAP. The span at 17 to 27 shows a compositional bias: acidic residues; the sequence is DDDDDAEEETM. A PCI domain is found at 256–450; that stretch reads DAIRMFSHIL…RSRLRHGKEI (195 aa). Residues 431-440 show a composition bias toward basic and acidic residues; it reads LLERRGDPQQ.

It belongs to the eIF-3 subunit L family. In terms of assembly, component of the eukaryotic translation initiation factor 3 (eIF-3) complex.

It is found in the cytoplasm. Functionally, component of the eukaryotic translation initiation factor 3 (eIF-3) complex, which is involved in protein synthesis of a specialized repertoire of mRNAs and, together with other initiation factors, stimulates binding of mRNA and methionyl-tRNAi to the 40S ribosome. The eIF-3 complex specifically targets and initiates translation of a subset of mRNAs involved in cell proliferation. The polypeptide is Eukaryotic translation initiation factor 3 subunit L (Phaeosphaeria nodorum (strain SN15 / ATCC MYA-4574 / FGSC 10173) (Glume blotch fungus)).